Here is a 1041-residue protein sequence, read N- to C-terminus: MATPAGLERWVQDELHSVLGLSERHVAQFLIGTAQRCTSAEEFVQRLRDTDTLDLSGPARDFALRLWNKVPRKAVVEKPARAAEREARALLEKNRSYRLLEDSEESSEETVSRAGSSLQKKRKKRKHLRKKREEEEEEEASEKGKKKTGGSKQQTEKPESEDEWERTERERLQDLEERDAFAERVRQRDKDRTRNVLERSDKKAYEEAQKRLKMAEEDRKAMVPELRKKSRREYLAKREREKLEDLEAELADEEFLFGDVELSRHERQELKYKRRVRDLAREYRAAGEQEKLEATNRYHMPKETRGQPARAVDLVEEESGAPGEEQRRWEEARLGAASLKFGARDAASQEPKYQLVLEEEETIEFVRATQLQGDEEPSAPPTSTQAQQKESIQAVRRSLPVFPFREELLAAIANHQVLIIEGETGSGKTTQIPQYLFEEGYTNKGMKIACTQPRRVAAMSVAARVAREMGVKLGNEVGYSIRFEDCTSERTVLRYMTDGMLLREFLSEPDLASYSVVMVDEAHERTLHTDILFGLIKDVARFRPELKVLVASATMDTARFSTFFDDAPVFRIPGRRFPVDIFYTKAPEADYLEACVVSVLQIHVTQPPGDILVFLTGQEEIEAACEMLQDRCRRLGSKIRELLVLPIYANLPSDMQARIFQPTPPGARKVVVATNIAETSLTIEGIIYVLDPGFCKQKSYNPRTGMESLTVTPCSKASANQRAGRAGRVAAGKCFRLYTAWAYQHELEETTVPEIQRTSLGNVVLLLKSLGIHDLMHFDFLDPPPYETLLLALEQLYALGALNHLGELTTSGRKMAELPVDPMLSKMILASEKYSCSEEILTVAAMLSVNNSIFYRPKDKVVHADNARVNFFLPGGDHLVLLNVYTQWAESGYSSQWCYENFVQFRSMRRARDVREQLEGLLERVEVGLSSCQGDYIRVRKAITAGYFYHTARLTRSGYRTVKQQQTVFIHPNSSLFEQQPRWLLYHELVLTTKEFMRQVLEIESSWLLEVAPHYYKAKELEDPHAKKMPKKIGKTREELG.

2 disordered regions span residues 101–207 and 371–391; these read EDSE…AYEE and LQGDEEPSAPPTSTQAQQKES. Phosphoserine occurs at positions 103, 106, and 107. The segment covering 119-130 has biased composition (basic residues); the sequence is QKKRKKRKHLRK. S160 is modified (phosphoserine). Over residues 166 to 207 the composition is skewed to basic and acidic residues; it reads RTERERLQDLEERDAFAERVRQRDKDRTRNVLERSDKKAYEE. Residues 381–391 show a composition bias toward polar residues; the sequence is PTSTQAQQKES. Residues 409–573 enclose the Helicase ATP-binding domain; the sequence is LAAIANHQVL…FDDAPVFRIP (165 aa). 422–429 serves as a coordination point for ATP; the sequence is GETGSGKT. Positions 520–523 match the DEAH box motif; that stretch reads DEAH. The 174-residue stretch at 598–771 folds into the Helicase C-terminal domain; it reads SVLQIHVTQP…NVVLLLKSLG (174 aa). At T712 the chain carries Phosphothreonine.

This sequence belongs to the DEAD box helicase family. DEAH subfamily. DDX16/PRP8 sub-subfamily. In terms of assembly, component of pre-catalytic spliceosome complexes. Component of the minor spliceosome, which splices U12-type introns. Interacts with GPKOW. Interacts with TRIM6. Interacts with RIGI. In terms of tissue distribution, expressed in the spleen, thyroid and testis. Also expressed in the brain and cerebellum.

It is found in the nucleus. The protein localises to the nucleoplasm. It localises to the cytoplasm. The enzyme catalyses ATP + H2O = ADP + phosphate + H(+). Functionally, required for pre-mRNA splicing as a component of the spliceosome. Contributes to pre-mRNA splicing after spliceosome formation and prior to the first transesterification reaction. As a component of the minor spliceosome, involved in the splicing of U12-type introns in pre-mRNAs. Also plays a role in innate antiviral response by acting as a pattern recognition receptor sensing splicing signals in viral RNA. Mechanistically, TRIM6 promotes the interaction between unanchored 'Lys-48'-polyubiquitin chains and DHX16, leading to DHX16 interaction with RIGI and ssRNA to amplify RIGI-dependent innate antiviral immune responses. The sequence is that of Pre-mRNA-splicing factor ATP-dependent RNA helicase DHX16 (DHX16) from Homo sapiens (Human).